Reading from the N-terminus, the 444-residue chain is C4-dicarboxylate transport protein 2 (444 aa).

Helical transmembrane passes span 23–43, 61–81, 95–115, 162–182, 198–218, and 236–256; these read ILYV…WLWP, LIKM…IAHI, LVYF…VANV, GEIL…MGLG, AMFG…FGAM, and LIAT…GIIA.

This sequence belongs to the dicarboxylate/amino acid:cation symporter (DAACS) (TC 2.A.23) family.

The protein localises to the cell inner membrane. Its function is as follows. Responsible for the transport of dicarboxylates such as succinate, fumarate, and malate from the periplasm across the membrane. The chain is C4-dicarboxylate transport protein 2 from Bradyrhizobium diazoefficiens (strain JCM 10833 / BCRC 13528 / IAM 13628 / NBRC 14792 / USDA 110).